The chain runs to 276 residues: Bifunctional esterase/perhydrolase DCH (276 aa).

An AB hydrolase-1 domain is found at proline 23–phenylalanine 254. Catalysis depends on residues serine 97, aspartate 227, and histidine 256.

The protein belongs to the AB hydrolase superfamily. Bacterial non-heme haloperoxidase / perhydrolase family. As to quaternary structure, homodimer.

It carries out the reaction 3,4-dihydrocoumarin + H2O = 3-(2-hydroxyphenyl)propanoate + H(+). It catalyses the reaction peracetic acid + H2O = acetate + H2O2 + H(+). The enzyme catalyses a percarboxylic acid + H2O = a carboxylate + H2O2 + H(+). Inhibited by the serine protease inhibitors diisopropyl fluorophosphate and phenylmethanesulfonyl fluoride. Multifunctional enzyme, which shows esterase and perhydrolase activities, and is capable of organic acid-assisted bromination of organic compounds. Catalyzes the hydrolysis of 3,4-dihydrocoumarin. Aromatic lactones other than 3,4-dihydrocoumarin, such as 2-coumaranone and homogentisic acid lactone, are also substrates, but their activities relative to that of 3,4-dihydrocoumarin are quite low. Also catalyzes the hydrolysis of several linear esters, with specificity toward methyl esters. In addition, shows perhydrolase activity and catalyzes the dose- and time-dependent degradation of peracetic acid, a broad-spectrum biocide, to acetic acid and hydrogen peroxide. It suggests that in vivo DCH may play a role in the oxidative stress defense system and detoxify peroxoacids in conjunction with the catalase, i.e. peroxoacids are first hydrolyzed to the corresponding acids and hydrogen peroxide by DCH, and then the resulting hydrogen peroxide is degraded by the catalase. Also shows organic acid-assisted bromination activity toward monochlorodimedon when incubated with hydrogen peroxide and dihydrocoumarin or an organic acid, such as acetate and n-butyrate. The protein is Bifunctional esterase/perhydrolase DCH of Acinetobacter calcoaceticus.